A 355-amino-acid polypeptide reads, in one-letter code: uncharacterized protein (355 aa).

Residue 132 to 139 (GPPGCGKT) coordinates ATP.

Belongs to the AAA ATPase family.

Its subcellular location is the mitochondrion. This is an uncharacterized protein from Schizosaccharomyces pombe (strain 972 / ATCC 24843) (Fission yeast).